Consider the following 398-residue polypeptide: Carbamoyl phosphate synthase small chain (398 aa).

The CPSase stretch occupies residues M1 to E199. The L-glutamine site is built by S54, G251, and G253. The Glutamine amidotransferase type-1 domain occupies H203–E391. Residue C280 is the Nucleophile of the active site. The L-glutamine site is built by L281, Q284, N322, G324, and F325. Active-site residues include H364 and E366.

Belongs to the CarA family. As to quaternary structure, composed of two chains; the small (or glutamine) chain promotes the hydrolysis of glutamine to ammonia, which is used by the large (or ammonia) chain to synthesize carbamoyl phosphate. Tetramer of heterodimers (alpha,beta)4.

It catalyses the reaction hydrogencarbonate + L-glutamine + 2 ATP + H2O = carbamoyl phosphate + L-glutamate + 2 ADP + phosphate + 2 H(+). The enzyme catalyses L-glutamine + H2O = L-glutamate + NH4(+). It functions in the pathway amino-acid biosynthesis; L-arginine biosynthesis; carbamoyl phosphate from bicarbonate: step 1/1. Its pathway is pyrimidine metabolism; UMP biosynthesis via de novo pathway; (S)-dihydroorotate from bicarbonate: step 1/3. Functionally, small subunit of the glutamine-dependent carbamoyl phosphate synthetase (CPSase). CPSase catalyzes the formation of carbamoyl phosphate from the ammonia moiety of glutamine, carbonate, and phosphate donated by ATP, constituting the first step of 2 biosynthetic pathways, one leading to arginine and/or urea and the other to pyrimidine nucleotides. The small subunit (glutamine amidotransferase) binds and cleaves glutamine to supply the large subunit with the substrate ammonia. This Mesorhizobium japonicum (strain LMG 29417 / CECT 9101 / MAFF 303099) (Mesorhizobium loti (strain MAFF 303099)) protein is Carbamoyl phosphate synthase small chain.